The sequence spans 473 residues: Cysteine--tRNA ligase (473 aa).

Cys-29 provides a ligand contact to Zn(2+). The short motif at 31–41 is the 'HIGH' region element; the sequence is PTVYDRAHLGN. 3 residues coordinate Zn(2+): Cys-225, His-250, and Glu-254. A 'KMSKS' region motif is present at residues 281-285; sequence KMSKS. Lys-284 is an ATP binding site.

This sequence belongs to the class-I aminoacyl-tRNA synthetase family. Monomer. It depends on Zn(2+) as a cofactor.

The protein localises to the cytoplasm. It carries out the reaction tRNA(Cys) + L-cysteine + ATP = L-cysteinyl-tRNA(Cys) + AMP + diphosphate. In Roseobacter denitrificans (strain ATCC 33942 / OCh 114) (Erythrobacter sp. (strain OCh 114)), this protein is Cysteine--tRNA ligase.